A 226-amino-acid chain; its full sequence is tRNA (guanine-N(1)-)-methyltransferase (226 aa).

S-adenosyl-L-methionine contacts are provided by residues Gly110 and 130-135 (IGDFIL).

It belongs to the RNA methyltransferase TrmD family. Homodimer.

It is found in the cytoplasm. The catalysed reaction is guanosine(37) in tRNA + S-adenosyl-L-methionine = N(1)-methylguanosine(37) in tRNA + S-adenosyl-L-homocysteine + H(+). Its function is as follows. Specifically methylates guanosine-37 in various tRNAs. The chain is tRNA (guanine-N(1)-)-methyltransferase from Nitratiruptor sp. (strain SB155-2).